The following is a 211-amino-acid chain: Thiamine-phosphate synthase (211 aa).

Residues 37–41 (QLRIK) and Asn69 contribute to the 4-amino-2-methyl-5-(diphosphooxymethyl)pyrimidine site. Residues Asp70 and Asp89 each coordinate Mg(2+). 4-amino-2-methyl-5-(diphosphooxymethyl)pyrimidine is bound at residue Ser108. 134–136 (TQT) contacts 2-[(2R,5Z)-2-carboxy-4-methylthiazol-5(2H)-ylidene]ethyl phosphate. Lys137 provides a ligand contact to 4-amino-2-methyl-5-(diphosphooxymethyl)pyrimidine. Residues Gly166 and 186–187 (VS) contribute to the 2-[(2R,5Z)-2-carboxy-4-methylthiazol-5(2H)-ylidene]ethyl phosphate site.

It belongs to the thiamine-phosphate synthase family. Requires Mg(2+) as cofactor.

The catalysed reaction is 2-[(2R,5Z)-2-carboxy-4-methylthiazol-5(2H)-ylidene]ethyl phosphate + 4-amino-2-methyl-5-(diphosphooxymethyl)pyrimidine + 2 H(+) = thiamine phosphate + CO2 + diphosphate. The enzyme catalyses 2-(2-carboxy-4-methylthiazol-5-yl)ethyl phosphate + 4-amino-2-methyl-5-(diphosphooxymethyl)pyrimidine + 2 H(+) = thiamine phosphate + CO2 + diphosphate. It carries out the reaction 4-methyl-5-(2-phosphooxyethyl)-thiazole + 4-amino-2-methyl-5-(diphosphooxymethyl)pyrimidine + H(+) = thiamine phosphate + diphosphate. It participates in cofactor biosynthesis; thiamine diphosphate biosynthesis; thiamine phosphate from 4-amino-2-methyl-5-diphosphomethylpyrimidine and 4-methyl-5-(2-phosphoethyl)-thiazole: step 1/1. In terms of biological role, condenses 4-methyl-5-(beta-hydroxyethyl)thiazole monophosphate (THZ-P) and 2-methyl-4-amino-5-hydroxymethyl pyrimidine pyrophosphate (HMP-PP) to form thiamine monophosphate (TMP). This Shigella sonnei (strain Ss046) protein is Thiamine-phosphate synthase.